The sequence spans 388 residues: tRNA 2-selenouridine synthase (388 aa).

Residues 15–138 (FTADTPLIDV…ARQFLINTID (124 aa)) enclose the Rhodanese domain. The active-site S-selanylcysteine intermediate is the cysteine 98.

Belongs to the SelU family. In terms of assembly, monomer.

The enzyme catalyses 5-methylaminomethyl-2-thiouridine(34) in tRNA + selenophosphate + (2E)-geranyl diphosphate + H2O + H(+) = 5-methylaminomethyl-2-selenouridine(34) in tRNA + (2E)-thiogeraniol + phosphate + diphosphate. It catalyses the reaction 5-methylaminomethyl-2-thiouridine(34) in tRNA + (2E)-geranyl diphosphate = 5-methylaminomethyl-S-(2E)-geranyl-thiouridine(34) in tRNA + diphosphate. The catalysed reaction is 5-methylaminomethyl-S-(2E)-geranyl-thiouridine(34) in tRNA + selenophosphate + H(+) = 5-methylaminomethyl-2-(Se-phospho)selenouridine(34) in tRNA + (2E)-thiogeraniol. It carries out the reaction 5-methylaminomethyl-2-(Se-phospho)selenouridine(34) in tRNA + H2O = 5-methylaminomethyl-2-selenouridine(34) in tRNA + phosphate. Its function is as follows. Involved in the post-transcriptional modification of the uridine at the wobble position (U34) of tRNA(Lys), tRNA(Glu) and tRNA(Gln). Catalyzes the conversion of 2-thiouridine (S2U-RNA) to 2-selenouridine (Se2U-RNA). Acts in a two-step process involving geranylation of 2-thiouridine (S2U) to S-geranyl-2-thiouridine (geS2U) and subsequent selenation of the latter derivative to 2-selenouridine (Se2U) in the tRNA chain. This chain is tRNA 2-selenouridine synthase, found in Nitrosomonas eutropha (strain DSM 101675 / C91 / Nm57).